Consider the following 189-residue polypeptide: Insecticyanin-A (189 aa).

2 cysteine pairs are disulfide-bonded: Cys-9-Cys-119 and Cys-43-Cys-175.

This sequence belongs to the calycin superfamily. Lipocalin family. In terms of assembly, homotetramer. In terms of tissue distribution, synthesized only in the caterpillars, apparently by the epidermis and secreted into the hemolymph. The protein is passed over from the larval hemolymph to that of pupae and adults and is sequestered in the eggs.

It localises to the secreted. This protein binds a chromophore: biliverdin IX, isomer gamma. Mixed with lipoprotein-bound carotenes, this blue protein provides hornworms with their green cryptic coloration which serves a camouflage. This is Insecticyanin-A (INSA) from Manduca sexta (Tobacco hawkmoth).